Consider the following 383-residue polypeptide: tRNA-specific 2-thiouridylase MnmA (383 aa).

Residues 29–36 (GMSGGVDS) and methionine 55 each bind ATP. An interaction with target base in tRNA region spans residues 115–117 (NPD). Cysteine 120 acts as the Nucleophile in catalysis. Cysteine 120 and cysteine 217 are oxidised to a cystine. An ATP-binding site is contributed by glycine 145. The interaction with tRNA stretch occupies residues 167 to 169 (KDQ). Cysteine 217 acts as the Cysteine persulfide intermediate in catalysis. The segment at 329 to 330 (RY) is interaction with tRNA.

This sequence belongs to the MnmA/TRMU family.

The protein resides in the cytoplasm. The catalysed reaction is S-sulfanyl-L-cysteinyl-[protein] + uridine(34) in tRNA + AH2 + ATP = 2-thiouridine(34) in tRNA + L-cysteinyl-[protein] + A + AMP + diphosphate + H(+). Its function is as follows. Catalyzes the 2-thiolation of uridine at the wobble position (U34) of tRNA, leading to the formation of s(2)U34. The chain is tRNA-specific 2-thiouridylase MnmA from Histophilus somni (strain 2336) (Haemophilus somnus).